The primary structure comprises 166 residues: MSETQIAPLTLNIQYTKDLSFEVPGAPAIYTLLRQAPTVNINLDVQVQRLQDDAHVYEVTLTTRAEATHPAPAESGNGAEGGKDLTVFIADLSYAGVFTLTGIPDNQIEPVLLVECPRLLFPFARNILADVTRDGGFPPVMLGPVDFVGLWQARRAQDDGETIANA.

The protein belongs to the SecB family. Homotetramer, a dimer of dimers. One homotetramer interacts with 1 SecA dimer.

The protein resides in the cytoplasm. Its function is as follows. One of the proteins required for the normal export of preproteins out of the cell cytoplasm. It is a molecular chaperone that binds to a subset of precursor proteins, maintaining them in a translocation-competent state. It also specifically binds to its receptor SecA. The protein is Protein-export protein SecB of Acidiphilium cryptum (strain JF-5).